Consider the following 149-residue polypeptide: Transcriptional repressor NrdR (149 aa).

A zinc finger spans residues 3-34 (CPFCSENDTKVIDSRLVADGHQVRRRRQCLAC). Residues 49 to 139 (PKVIKSNGNR…VYRSFEDIRE (91 aa)) enclose the ATP-cone domain.

The protein belongs to the NrdR family. The cofactor is Zn(2+).

In terms of biological role, negatively regulates transcription of bacterial ribonucleotide reductase nrd genes and operons by binding to NrdR-boxes. The polypeptide is Transcriptional repressor NrdR (Vibrio atlanticus (strain LGP32) (Vibrio splendidus (strain Mel32))).